The sequence spans 146 residues: 3-dehydroquinate dehydratase (146 aa).

The Proton acceptor role is filled by Y22. Residues N74, H80, and D87 each contribute to the substrate site. H100 (proton donor) is an active-site residue. Residues 101–102 (LS) and R111 each bind substrate.

This sequence belongs to the type-II 3-dehydroquinase family. As to quaternary structure, homododecamer.

The enzyme catalyses 3-dehydroquinate = 3-dehydroshikimate + H2O. Its pathway is metabolic intermediate biosynthesis; chorismate biosynthesis; chorismate from D-erythrose 4-phosphate and phosphoenolpyruvate: step 3/7. Its function is as follows. Catalyzes a trans-dehydration via an enolate intermediate. In Clostridium beijerinckii (strain ATCC 51743 / NCIMB 8052) (Clostridium acetobutylicum), this protein is 3-dehydroquinate dehydratase.